Reading from the N-terminus, the 176-residue chain is Large ribosomal subunit protein uL10 (176 aa).

It belongs to the universal ribosomal protein uL10 family. Part of the ribosomal stalk of the 50S ribosomal subunit. The N-terminus interacts with L11 and the large rRNA to form the base of the stalk. The C-terminus forms an elongated spine to which L12 dimers bind in a sequential fashion forming a multimeric L10(L12)X complex.

Functionally, forms part of the ribosomal stalk, playing a central role in the interaction of the ribosome with GTP-bound translation factors. The chain is Large ribosomal subunit protein uL10 from Saccharophagus degradans (strain 2-40 / ATCC 43961 / DSM 17024).